The sequence spans 177 residues: Adenine phosphoribosyltransferase (177 aa).

Belongs to the purine/pyrimidine phosphoribosyltransferase family. Homodimer.

Its subcellular location is the cytoplasm. The enzyme catalyses AMP + diphosphate = 5-phospho-alpha-D-ribose 1-diphosphate + adenine. It participates in purine metabolism; AMP biosynthesis via salvage pathway; AMP from adenine: step 1/1. In terms of biological role, catalyzes a salvage reaction resulting in the formation of AMP, that is energically less costly than de novo synthesis. This chain is Adenine phosphoribosyltransferase, found in Cutibacterium acnes (strain DSM 16379 / KPA171202) (Propionibacterium acnes).